A 335-amino-acid polypeptide reads, in one-letter code: Ornithine carbamoyltransferase, catabolic (335 aa).

Residues 59–62 (STRT), glutamine 86, arginine 110, and 137–140 (HPTQ) each bind carbamoyl phosphate. Residues asparagine 169, aspartate 233, and 237-238 (SM) each bind L-ornithine. Carbamoyl phosphate-binding positions include 274 to 275 (CL) and arginine 319.

It belongs to the aspartate/ornithine carbamoyltransferase superfamily. OTCase family.

It localises to the cytoplasm. It carries out the reaction carbamoyl phosphate + L-ornithine = L-citrulline + phosphate + H(+). It participates in amino-acid degradation; L-arginine degradation via ADI pathway; carbamoyl phosphate from L-arginine: step 2/2. In terms of biological role, reversibly catalyzes the transfer of the carbamoyl group from carbamoyl phosphate (CP) to the N(epsilon) atom of ornithine (ORN) to produce L-citrulline. The chain is Ornithine carbamoyltransferase, catabolic (arcB) from Bacillus licheniformis (strain ATCC 14580 / DSM 13 / JCM 2505 / CCUG 7422 / NBRC 12200 / NCIMB 9375 / NCTC 10341 / NRRL NRS-1264 / Gibson 46).